The sequence spans 3387 residues: Genome polyprotein (3387 aa).

Residues 1–100 (MNQRKKVVRP…LNILNGRKRS (100 aa)) lie on the Cytoplasmic side of the membrane. Residues 36 to 71 (LFSGKGPLRMVLAFITFLRVLSIPPTAGILKRWGQL) form a hydrophobic; homodimerization of capsid protein C region. A propeptide spans 100–113 (STITLLCLIPTVMA) (ER anchor for the capsid protein C, removed in mature form by serine protease NS3). Residues 101–117 (TITLLCLIPTVMAFSLS) traverse the membrane as a helical segment. The Extracellular portion of the chain corresponds to 118 to 237 (TRDGEPLMIV…GAWKHAQRVE (120 aa)). Residue Asn-182 is glycosylated (N-linked (GlcNAc...) asparagine; by host). Residues 238-258 (SWILRNPGFALLAGFMAYMIG) form a helical membrane-spanning segment. Over 259-265 (QTGIQRT) the chain is Cytoplasmic. Residues 266–279 (VFFVLMMLVAPSYG) form a helical membrane-spanning segment. Residues 280–725 (MRCVGVGNRD…HQVFGSVYTT (446 aa)) lie on the Extracellular side of the membrane. 4 disulfide bridges follow: Cys-282–Cys-309, Cys-339–Cys-400, Cys-353–Cys-384, and Cys-371–Cys-395. N-linked (GlcNAc...) asparagine; by host glycosylation is present at Asn-346. A fusion peptide region spans residues 377-390 (DRGWGNGCGLFGKG). Residue Asn-432 is glycosylated (N-linked (GlcNAc...) asparagine; by host). 2 disulfides stabilise this stretch: Cys-464–Cys-564 and Cys-581–Cys-612. A helical membrane pass occupies residues 726–746 (MFGGVSWMIRILIGFLVLWIG). Topologically, residues 747-751 (TNSRN) are cytoplasmic. A helical membrane pass occupies residues 752–772 (TSMAMTCIAVGGITLFLGFTV). Residues 773-1194 (QADMGCVASW…MLGDTMSGRI (422 aa)) lie on the Extracellular side of the membrane. 6 cysteine pairs are disulfide-bonded: Cys-778-Cys-789, Cys-829-Cys-917, Cys-953-Cys-997, Cys-1054-Cys-1103, Cys-1065-Cys-1087, and Cys-1086-Cys-1090. Residues Asn-904 and Asn-981 are each glycosylated (N-linked (GlcNAc...) asparagine; by host). Residues 1195–1218 (GGQIHLAIMAVFKMSPGYVLGVFL) form a helical membrane-spanning segment. Residues 1219–1224 (RKLTSR) are Lumenal-facing. A helical membrane pass occupies residues 1225 to 1243 (ETALMVIGMAMTTVLSIPH). At 1244 to 1267 (DLMELIDGISLGLILLKIVTQFDN) the chain is on the cytoplasmic side. A helical transmembrane segment spans residues 1268-1288 (TQVGTLALSLTFIRSTMPLVM). Ala-1289 is a topological domain (lumenal). A helical transmembrane segment spans residues 1290 to 1308 (WRTIMAVLFVVTLIPLCRT). At 1309 to 1316 (SCLQKQSH) the chain is on the lumenal side. A helical membrane pass occupies residues 1317 to 1337 (WVEITALILGAQALPVYLMTL). Residues 1338 to 1345 (MKGASRRS) lie on the Cytoplasmic side of the membrane. A helical membrane pass occupies residues 1346–1366 (WPLNEGIMAVGLVSLLGSALL). The Lumenal segment spans residues 1367–1369 (KND). Residues 1370–1390 (VPLAGPMVAGGLLLAAYVMSG) traverse the membrane as a helical segment. Residues 1391–1437 (SSADLSLEKAANVQWDEMADITGSSPIIEVKQDEDGSFSIRDVEETN) are Cytoplasmic-facing. The interacts with and activates NS3 protease stretch occupies residues 1397–1436 (LEKAANVQWDEMADITGSSPIIEVKQDEDGSFSIRDVEET). The segment at residues 1438–1458 (MITLLVKLALITVSGLYPLAI) is an intramembrane region (helical). Topologically, residues 1459–2143 (PVTMTLWYMW…QHALNELPES (685 aa)) are cytoplasmic. Residues 1475 to 1652 (SGALWDVPSP…ERIGEPDYEV (178 aa)) form the Peptidase S7 domain. Residues His-1525, Asp-1549, and Ser-1609 each act as charge relay system; for serine protease NS3 activity in the active site. Residues 1654-1810 (EDIFRKKRLT…QSNSPIEDIE (157 aa)) enclose the Helicase ATP-binding domain. The segment at 1658 to 1661 (RKKR) is important for RNA-binding. 1667–1674 (LHPGAGKT) lines the ATP pocket. Positions 1758–1761 (DEAH) match the DEAH box motif. The Helicase C-terminal domain occupies 1820 to 1987 (TGFDWITDYQ…IIPTLFGPER (168 aa)). Lys-1862 carries the post-translational modification N6-acetyllysine; by host. The chain crosses the membrane as a helical span at residues 2144 to 2164 (LETLMLVALLGAMTAGIFLFF). The Lumenal portion of the chain corresponds to 2165–2169 (MQGKG). Residues 2170–2190 (IGKLSMGLITIAVASGLLWVA) constitute an intramembrane region (helical). Glu-2191 is a topological domain (lumenal). The chain crosses the membrane as a helical span at residues 2192–2212 (IQPQWIAASIILEFFLMVLLI). The Cytoplasmic portion of the chain corresponds to 2213–2225 (PEPEKQRTPQDNQ). The helical transmembrane segment at 2226–2246 (LIYVILTILTIIGLIAANEMG) threads the bilayer. Residues 2247 to 2270 (LIEKTKTDFGFYQVKTETTILDVD) lie on the Lumenal side of the membrane. Residues 2271 to 2291 (LRPASAWTLYAVATTILTPML) constitute an intramembrane region (helical). The Lumenal segment spans residues 2292–2301 (RHTIENTSAN). N-linked (GlcNAc...) asparagine; by host glycosylation is found at Asn-2297 and Asn-2301. Residues 2302 to 2322 (LSLAAIANQAAVLMGLGKGWP) constitute an intramembrane region (helical). Residues 2323–2343 (LHRMDLGVPLLAMGCYSQVNP) are Lumenal-facing. A helical membrane pass occupies residues 2344-2364 (TTLTASLVMLLVHYAIIGPGL). Residues 2365 to 2409 (QAKATREAQKRTAAGIMKNPTVDGITVIDLEPISYDPKFEKQLGQ) are Cytoplasmic-facing. A helical membrane pass occupies residues 2410 to 2430 (VMLLVLCAGQLLLMRTTWAFC). Residues 2431 to 2455 (EVLTLATGPILTLWEGNPGRFWNTT) lie on the Lumenal side of the membrane. A glycan (N-linked (GlcNAc...) asparagine; by host) is linked at Asn-2453. The helical transmembrane segment at 2456-2476 (IAVSTANIFRGSYLAGAGLAF) threads the bilayer. At 2477-3387 (SLIKNAQTPR…SAPSESEGVL (911 aa)) the chain is on the cytoplasmic side. One can recognise an mRNA cap 0-1 NS5-type MT domain in the interval 2489–2751 (TGTTGETLGE…DVDLGAGTRS (263 aa)). Residue Ser-2543 coordinates S-adenosyl-L-methionine. The residue at position 2543 (Ser-2543) is a Phosphoserine. Lys-2548 serves as the catalytic For 2'-O-MTase activity. The SUMO-interacting motif motif lies at 2564-2567 (VVDL). S-adenosyl-L-methionine-binding residues include Gly-2573, Trp-2574, Thr-2591, Lys-2592, Asp-2618, and Val-2619. The active-site For 2'-O-MTase activity is Asp-2633. Ile-2634 serves as a coordination point for S-adenosyl-L-methionine. Catalysis depends on for 2'-O-MTase activity residues Lys-2668 and Glu-2704. Tyr-2706 lines the S-adenosyl-L-methionine pocket. Residues Glu-2925, His-2929, Cys-2934, and Cys-2937 each contribute to the Zn(2+) site. Residues 3016-3166 (LMYADDTAGW…PLDERFGTSL (151 aa)) enclose the RdRp catalytic domain. Residues His-3200, Cys-3216, and Cys-3335 each contribute to the Zn(2+) site.

In the N-terminal section; belongs to the class I-like SAM-binding methyltransferase superfamily. mRNA cap 0-1 NS5-type methyltransferase family. In terms of assembly, homodimer. Interacts (via N-terminus) with host EXOC1 (via C-terminus); this interaction results in EXOC1 degradation through the proteasome degradation pathway. Forms heterodimers with envelope protein E in the endoplasmic reticulum and Golgi. As to quaternary structure, homodimer; in the endoplasmic reticulum and Golgi. Interacts with protein prM. Interacts with non-structural protein 1. In terms of assembly, homodimer; Homohexamer when secreted. Interacts with envelope protein E. Interacts (via N-terminus) with serine protease NS3. As to quaternary structure, forms a heterodimer with serine protease NS3. May form homooligomers. In terms of assembly, forms a heterodimer with NS2B. Interacts with NS4B. Interacts with unphosphorylated RNA-directed RNA polymerase NS5; this interaction stimulates RNA-directed RNA polymerase NS5 guanylyltransferase activity. Interacts with host SHFL. Interacts with host MAVS; this interaction inhibits the synthesis of IFN-beta. Interacts with host SHFL. Interacts with host AUP1; the interaction occurs in the presence of Dengue virus NS4B and induces lipophagy which facilitates production of virus progeny particles. As to quaternary structure, interacts with serine protease NS3. In terms of assembly, homodimer. Interacts with host STAT2; this interaction inhibits the phosphorylation of the latter, and, when all viral proteins are present (polyprotein), targets STAT2 for degradation. Interacts with serine protease NS3. Interacts with host PAF1 complex; the interaction may prevent the recruitment of the PAF1 complex to interferon-responsive genes, and thus reduces the immune response. Specific enzymatic cleavages in vivo yield mature proteins. Cleavages in the lumen of endoplasmic reticulum are performed by host signal peptidase, whereas cleavages in the cytoplasmic side are performed by serine protease NS3. Signal cleavage at the 2K-4B site requires a prior NS3 protease-mediated cleavage at the 4A-2K site. Post-translationally, cleaved in post-Golgi vesicles by a host furin, releasing the mature small envelope protein M, and peptide pr. This cleavage is incomplete as up to 30% of viral particles still carry uncleaved prM. In terms of processing, N-glycosylated. N-glycosylated. The excreted form is glycosylated and this is required for efficient secretion of the protein from infected cells. Post-translationally, acetylated by host KAT5. Acetylation modulates NS3 RNA-binding and unwinding activities and plays an important positive role for viral replication. In terms of processing, sumoylation of RNA-directed RNA polymerase NS5 increases NS5 protein stability allowing proper viral RNA replication. Phosphorylated on serines residues. This phosphorylation may trigger NS5 nuclear localization.

The protein resides in the virion. Its subcellular location is the host nucleus. The protein localises to the host cytoplasm. It localises to the host perinuclear region. It is found in the secreted. The protein resides in the virion membrane. Its subcellular location is the host endoplasmic reticulum membrane. The protein localises to the host mitochondrion. The enzyme catalyses Selective hydrolysis of -Xaa-Xaa-|-Yaa- bonds in which each of the Xaa can be either Arg or Lys and Yaa can be either Ser or Ala.. The catalysed reaction is RNA(n) + a ribonucleoside 5'-triphosphate = RNA(n+1) + diphosphate. It carries out the reaction a ribonucleoside 5'-triphosphate + H2O = a ribonucleoside 5'-diphosphate + phosphate + H(+). It catalyses the reaction ATP + H2O = ADP + phosphate + H(+). The enzyme catalyses a 5'-end (5'-triphosphoguanosine)-ribonucleoside in mRNA + S-adenosyl-L-methionine = a 5'-end (N(7)-methyl 5'-triphosphoguanosine)-ribonucleoside in mRNA + S-adenosyl-L-homocysteine. The catalysed reaction is a 5'-end (N(7)-methyl 5'-triphosphoguanosine)-ribonucleoside in mRNA + S-adenosyl-L-methionine = a 5'-end (N(7)-methyl 5'-triphosphoguanosine)-(2'-O-methyl-ribonucleoside) in mRNA + S-adenosyl-L-homocysteine + H(+). Functionally, plays a role in virus budding by binding to the cell membrane and gathering the viral RNA into a nucleocapsid that forms the core of a mature virus particle. During virus entry, may induce genome penetration into the host cytoplasm after hemifusion induced by the surface proteins. Can migrate to the cell nucleus where it modulates host functions. Overcomes the anti-viral effects of host EXOC1 by sequestering and degrading the latter through the proteasome degradation pathway. Its function is as follows. Regulates the ATPase activity of the NS3 helicase activity. NS4A allows NS3 helicase to conserve energy during unwinding. Plays a role in the inhibition of the host innate immune response. Interacts with host MAVS and thereby prevents the interaction between RIGI and MAVS. In turn, IFN-beta production is impaired. Interacts with host AUP1 which mediates induction of lipophagy in host cells and facilitates production of virus progeny particles. In terms of biological role, inhibits RNA silencing by interfering with host Dicer. Prevents premature fusion activity of envelope proteins in trans-Golgi by binding to envelope protein E at pH6.0. After virion release in extracellular space, gets dissociated from E dimers. Functionally, acts as a chaperone for envelope protein E during intracellular virion assembly by masking and inactivating envelope protein E fusion peptide. prM is the only viral peptide matured by host furin in the trans-Golgi network probably to avoid catastrophic activation of the viral fusion activity in acidic Golgi compartment prior to virion release. prM-E cleavage is inefficient, and many virions are only partially matured. These uncleaved prM would play a role in immune evasion. Its function is as follows. May play a role in virus budding. Exerts cytotoxic effects by activating a mitochondrial apoptotic pathway through M ectodomain. May display a viroporin activity. In terms of biological role, binds to host cell surface receptor and mediates fusion between viral and cellular membranes. Envelope protein is synthesized in the endoplasmic reticulum in the form of heterodimer with protein prM. They play a role in virion budding in the ER, and the newly formed immature particle is covered with 60 spikes composed of heterodimer between precursor prM and envelope protein E. The virion is transported to the Golgi apparatus where the low pH causes dissociation of PrM-E heterodimers and formation of E homodimers. prM-E cleavage is inefficient, and many virions are only partially matured. These uncleaved prM would play a role in immune evasion. Involved in immune evasion, pathogenesis and viral replication. Once cleaved off the polyprotein, is targeted to three destinations: the viral replication cycle, the plasma membrane and the extracellular compartment. Essential for viral replication. Required for formation of the replication complex and recruitment of other non-structural proteins to the ER-derived membrane structures. Excreted as a hexameric lipoparticle that plays a role against host immune response. Antagonizing the complement function. Binds to the host macrophages and dendritic cells. Inhibits signal transduction originating from Toll-like receptor 3 (TLR3). Functionally, disrupts the host endothelial glycocalyx layer of host pulmonary microvascular endothelial cells, inducing degradation of sialic acid and shedding of heparan sulfate proteoglycans. NS1 induces expression of sialidases, heparanase, and activates cathepsin L, which activates heparanase via enzymatic cleavage. These effects are probably linked to the endothelial hyperpermeability observed in severe dengue disease. Its function is as follows. Component of the viral RNA replication complex that functions in virion assembly and antagonizes the host immune response. In terms of biological role, required cofactor for the serine protease function of NS3. May have membrane-destabilizing activity and form viroporins. Displays three enzymatic activities: serine protease, NTPase and RNA helicase. NS3 serine protease, in association with NS2B, performs its autocleavage and cleaves the polyprotein at dibasic sites in the cytoplasm: C-prM, NS2A-NS2B, NS2B-NS3, NS3-NS4A, NS4A-2K and NS4B-NS5. NS3 RNA helicase binds RNA and unwinds dsRNA in the 3' to 5' direction. Functionally, functions as a signal peptide for NS4B and is required for the interferon antagonism activity of the latter. Its function is as follows. Induces the formation of ER-derived membrane vesicles where the viral replication takes place. Inhibits interferon (IFN)-induced host STAT1 phosphorylation and nuclear translocation, thereby preventing the establishment of cellular antiviral state by blocking the IFN-alpha/beta pathway. In terms of biological role, replicates the viral (+) and (-) RNA genome, and performs the capping of genomes in the cytoplasm. NS5 methylates viral RNA cap at guanine N-7 and ribose 2'-O positions. Besides its role in RNA genome replication, also prevents the establishment of cellular antiviral state by blocking the interferon-alpha/beta (IFN-alpha/beta) signaling pathway. Inhibits host TYK2 and STAT2 phosphorylation, thereby preventing activation of JAK-STAT signaling pathway. May reduce immune responses by preventing the recruitment of the host PAF1 complex to interferon-responsive genes. In Dengue virus type 4 (strain Dominica/814669/1981) (DENV-4), this protein is Genome polyprotein.